The sequence spans 235 residues: Ubiquinone/menaquinone biosynthesis C-methyltransferase UbiE (235 aa).

Threonine 59, aspartate 84, and serine 123 together coordinate S-adenosyl-L-methionine.

Belongs to the class I-like SAM-binding methyltransferase superfamily. MenG/UbiE family.

It carries out the reaction a 2-demethylmenaquinol + S-adenosyl-L-methionine = a menaquinol + S-adenosyl-L-homocysteine + H(+). It catalyses the reaction a 2-methoxy-6-(all-trans-polyprenyl)benzene-1,4-diol + S-adenosyl-L-methionine = a 5-methoxy-2-methyl-3-(all-trans-polyprenyl)benzene-1,4-diol + S-adenosyl-L-homocysteine + H(+). It functions in the pathway quinol/quinone metabolism; menaquinone biosynthesis; menaquinol from 1,4-dihydroxy-2-naphthoate: step 2/2. It participates in cofactor biosynthesis; ubiquinone biosynthesis. Its function is as follows. Methyltransferase required for the conversion of demethylmenaquinol (DMKH2) to menaquinol (MKH2) and the conversion of 2-polyprenyl-6-methoxy-1,4-benzoquinol (DDMQH2) to 2-polyprenyl-3-methyl-6-methoxy-1,4-benzoquinol (DMQH2). The sequence is that of Ubiquinone/menaquinone biosynthesis C-methyltransferase UbiE from Campylobacter jejuni subsp. jejuni serotype O:2 (strain ATCC 700819 / NCTC 11168).